Reading from the N-terminus, the 468-residue chain is MSSGKIAQVVGPVVDVMFASGDKLPEINNALIVYKDSDKKQKIVLEVALELGDGMVRTIAMESTDGLTRGLEVLDTGRAISVPVGKETLGRVFNVLGETIDLEEPFAEDVDRQPIHKKAPSFDELSTSSEILETGIKVIDLLAPYLKGGKVGLFGGAGVGKTVLIQELIHNIAQEHGGISVFTGVGERTREGNDLYWEMKESGVIEKTAMVFGQMNEPPGARMRVALTGLTIAEYFRDVEGQDVLLFIDNIFRFTQAGSEVSALLGRMPSAVGYQPTLATEMGQLQERITSTQKGSVTSIQAIYVPADDYTDPAPATAFAHLDSTTNLERKLTQMGIYPAVDPLASSSRALSPEIVGEEHYAVATEVQRVLQRYRELQDIIAILGMDELSDEEKTLVGRARRIQFFLSQNFNVAEQFTGLPGSYVPVADTVRGFKEILEGKYDDLPEDAFRSVGPIEDVIKKAEKMGF.

155–162 (GGAGVGKT) provides a ligand contact to ATP.

This sequence belongs to the ATPase alpha/beta chains family. In terms of assembly, F-type ATPases have 2 components, CF(1) - the catalytic core - and CF(0) - the membrane proton channel. CF(1) has five subunits: alpha(3), beta(3), gamma(1), delta(1), epsilon(1). CF(0) has three main subunits: a(1), b(2) and c(9-12). The alpha and beta chains form an alternating ring which encloses part of the gamma chain. CF(1) is attached to CF(0) by a central stalk formed by the gamma and epsilon chains, while a peripheral stalk is formed by the delta and b chains.

Its subcellular location is the cell membrane. The catalysed reaction is ATP + H2O + 4 H(+)(in) = ADP + phosphate + 5 H(+)(out). In terms of biological role, produces ATP from ADP in the presence of a proton gradient across the membrane. The catalytic sites are hosted primarily by the beta subunits. This is ATP synthase subunit beta from Streptococcus pyogenes serotype M5 (strain Manfredo).